Consider the following 332-residue polypeptide: Tetraacyldisaccharide 4'-kinase (332 aa).

An ATP-binding site is contributed by 53–60; sequence SVGGNGKT.

The protein belongs to the LpxK family.

It carries out the reaction a lipid A disaccharide + ATP = a lipid IVA + ADP + H(+). Its pathway is glycolipid biosynthesis; lipid IV(A) biosynthesis; lipid IV(A) from (3R)-3-hydroxytetradecanoyl-[acyl-carrier-protein] and UDP-N-acetyl-alpha-D-glucosamine: step 6/6. Transfers the gamma-phosphate of ATP to the 4'-position of a tetraacyldisaccharide 1-phosphate intermediate (termed DS-1-P) to form tetraacyldisaccharide 1,4'-bis-phosphate (lipid IVA). This is Tetraacyldisaccharide 4'-kinase from Haemophilus influenzae (strain 86-028NP).